The chain runs to 343 residues: Thiamine-phosphate synthase (343 aa).

The tract at residues 1 to 123 (MQQASPTAIA…GACCKQLRYR (123 aa)) is unknown. The segment at 124-343 (VYALESGLLG…LLTQLSRINP (220 aa)) is thiamine-phosphate synthase. Residues 171–175 (QYRDK) and Asn203 each bind 4-amino-2-methyl-5-(diphosphooxymethyl)pyrimidine. Residues Asp204 and Asp223 each contribute to the Mg(2+) site. Ser242 contributes to the 4-amino-2-methyl-5-(diphosphooxymethyl)pyrimidine binding site. 268 to 270 (TPT) is a binding site for 2-[(2R,5Z)-2-carboxy-4-methylthiazol-5(2H)-ylidene]ethyl phosphate. Lys271 is a binding site for 4-amino-2-methyl-5-(diphosphooxymethyl)pyrimidine. A 2-[(2R,5Z)-2-carboxy-4-methylthiazol-5(2H)-ylidene]ethyl phosphate-binding site is contributed by Gly298.

The protein belongs to the thiamine-phosphate synthase family. Mg(2+) is required as a cofactor.

The enzyme catalyses 2-[(2R,5Z)-2-carboxy-4-methylthiazol-5(2H)-ylidene]ethyl phosphate + 4-amino-2-methyl-5-(diphosphooxymethyl)pyrimidine + 2 H(+) = thiamine phosphate + CO2 + diphosphate. It catalyses the reaction 2-(2-carboxy-4-methylthiazol-5-yl)ethyl phosphate + 4-amino-2-methyl-5-(diphosphooxymethyl)pyrimidine + 2 H(+) = thiamine phosphate + CO2 + diphosphate. It carries out the reaction 4-methyl-5-(2-phosphooxyethyl)-thiazole + 4-amino-2-methyl-5-(diphosphooxymethyl)pyrimidine + H(+) = thiamine phosphate + diphosphate. Its pathway is cofactor biosynthesis; thiamine diphosphate biosynthesis; thiamine phosphate from 4-amino-2-methyl-5-diphosphomethylpyrimidine and 4-methyl-5-(2-phosphoethyl)-thiazole: step 1/1. Its function is as follows. Condenses 4-methyl-5-(beta-hydroxyethyl)thiazole monophosphate (THZ-P) and 2-methyl-4-amino-5-hydroxymethyl pyrimidine pyrophosphate (HMP-PP) to form thiamine monophosphate (TMP). This Synechocystis sp. (strain ATCC 27184 / PCC 6803 / Kazusa) protein is Thiamine-phosphate synthase.